The chain runs to 590 residues: O-fucosyltransferase 2 (590 aa).

The segment covering M1–D16 has biased composition (basic and acidic residues). Residues M1 to H26 form a disordered region. The chain crosses the membrane as a helical; Signal-anchor for type II membrane protein span at residues T67 to S87. N125 is a glycosylation site (N-linked (GlcNAc...) asparagine). Residue H365–R367 participates in substrate binding. 2 N-linked (GlcNAc...) asparagine glycosylation sites follow: N485 and N546.

The protein belongs to the glycosyltransferase GT106 family.

It localises to the membrane. It functions in the pathway glycan metabolism. This chain is O-fucosyltransferase 2, found in Arabidopsis thaliana (Mouse-ear cress).